The following is a 212-amino-acid chain: uncharacterized protein (212 aa).

A helical membrane pass occupies residues 5 to 25 (IFIILIAVLLIGVNIKKIAAA).

The protein localises to the membrane. This is an uncharacterized protein from Borreliella burgdorferi (strain ATCC 35210 / DSM 4680 / CIP 102532 / B31) (Borrelia burgdorferi).